The chain runs to 947 residues: MILMNPKTSKILWLLGFLSLLSSFSLEIAAQTTQNINVLFINEVDNEPAAKAVEVVLTYLKKNIRYGLSVQLDSIEANKSDAKVLLEAICNKYATSIEKKQTPHLILDTTKSGIASETVKSFTQALGLPTISASYGQQGDLRQWRDLDEAKQKYLLQVMPPADIIPEAIRSIVIHMNITNAAILYDDSFVMDHKYKSLLQNIQTRHVITAIAKDGKREREEQIEKLRNLDINNFFILGTLQSIRMVLESVKPAYFERNFAWHAITQNEGEISSQRDNATIMFMKPMAYTQYRDRLGLLRTTYNLNEEPQLSSAFYFDLALRSFLTIKEMLQSGAWPKDMEYLNCDDFQGGNTPQRNLDLRDYFTKITEPTSYGTFDLVTQSTQPFNGHSFMKFEMDINVLQIRGGSSVNSKSIGKWISGLNSELIVKDEEQMKNLTADTVYRIFTVVQAPFIMRDETAPKGYKGYCIDLINEIAAIVHFDYTIQEVEDGKFGNMDENGQWNGIVKKLMDKQADIGLGSMSVMAEREIVIDFTVPYYDLVGITIMMQRPSSPSSLFKFLTVLETNVWLCILAAYFFTSFLMWIFDRWSPYSYQNNREKYKDDEEKREFNLKECLWFCMTSLTPQGGGEAPKNLSGRLVAATWWLFGFIIIASYTANLAAFLTVSRLDTPVESLDDLAKQYKILYAPLNGSSAMTYFERMSNIEQMFYEIWKDLSLNDSLTAVERSKLAVWDYPVSDKYTKMWQAMQEAKLPATLDEAVARVRNSTAATGFAFLGDATDIRYLQLTNCDLQVVGEEFSRKPYAIAVQQGSHLKDQFNNAILTLLNKRQLEKLKEKWWKNDEALAKCDKPEDQSDGISIQNIGGVFIVIFVGIGMACITLVFEYWWYRYRKNPRIIDVAEANAERSNAADHPGKLVDGVILGHSGEKFEKSKAALRPRFNQYPATFKPRF.

The first 30 residues, 1-30, serve as a signal peptide directing secretion; it reads MILMNPKTSKILWLLGFLSLLSSFSLEIAA. The Extracellular segment spans residues 31–562; the sequence is QTTQNINVLF…SLFKFLTVLE (532 aa). N-linked (GlcNAc...) asparagine glycosylation is found at Asn78, Asn177, Asn277, and Asn434. Residues 563 to 583 traverse the membrane as a helical segment; sequence TNVWLCILAAYFFTSFLMWIF. Residues 584–641 are Cytoplasmic-facing; sequence DRWSPYSYQNNREKYKDDEEKREFNLKECLWFCMTSLTPQGGGEAPKNLSGRLVAATW. The chain crosses the membrane as a helical span at residues 642-662; sequence WLFGFIIIASYTANLAAFLTV. Over 663–858 the chain is Extracellular; that stretch reads SRLDTPVESL…DQSDGISIQN (196 aa). Residues Asn687, Asn715, and Asn762 are each glycosylated (N-linked (GlcNAc...) asparagine). A helical transmembrane segment spans residues 859–879; the sequence is IGGVFIVIFVGIGMACITLVF. The Cytoplasmic portion of the chain corresponds to 880–947; the sequence is EYWWYRYRKN…QYPATFKPRF (68 aa).

It belongs to the glutamate-gated ion channel (TC 1.A.10.1) family. Interacts with nocte. In the antenna, detected in neurons of the arista and also detected in sacculus neurons which innervate the first and second chambers (at protein level). Throughout the main body of the antenna, expressed in neurons which innervate the coeloconic class of olfactory sensilla (at protein level). Expressed in multiple cells of the dorsal organ including the dorsal organ cool cells (at protein level). Detected in femur and retina. Expressed in a subset of femur chordonotal neurons and antennal Johnston's Organ neurons.

The protein resides in the cell membrane. It localises to the cell projection. It is found in the axon. The protein localises to the dendrite. Its subcellular location is the perikaryon. The protein resides in the cilium. In terms of biological role, integral part of various neural sensory systems in the antenna that provide the neural basis for the response to environmental changes in temperature (thermosensation), humidity (hygrosensation) and odor detection. Required for odor-evoked electrophysiological responses in multiple neuron classes in the antenna and is likely to function as part of an olfactory receptor complex with Ir76a and Ir76b. Together with Ir21a and Ir93a, mediates the response of the larval dorsal organ cool cells, a trio of cool-responsive neurons, to cooling and is required for cool avoidance behavior. Required in chordonotal organ neurons for behavioral synchronization to low-amplitude temperature cycles and mediates circadian clock resetting by temperature. Together with Ir40a and Ir93a, mediates the response of the hydrosensory sacculus neurons to changes in relative humidity, and is required for dry detection and humidiy preference behavior. This is Ionotropic receptor 25a from Drosophila melanogaster (Fruit fly).